A 934-amino-acid chain; its full sequence is Serine/threonine-protein kinase PknD (934 aa).

The region spanning 4 to 296 (YELIRLIGKG…ELRQALQPYL (293 aa)) is the Protein kinase domain. Residues 10–18 (IGKGGMGEV) and lysine 33 each bind ATP. The Proton acceptor role is filled by aspartate 138.

This sequence belongs to the protein kinase superfamily. Ser/Thr protein kinase family. Interacts with Pkn1. In terms of processing, autophosphorylated on serine and threonine residues.

The enzyme catalyses L-seryl-[protein] + ATP = O-phospho-L-seryl-[protein] + ADP + H(+). It catalyses the reaction L-threonyl-[protein] + ATP = O-phospho-L-threonyl-[protein] + ADP + H(+). Together with the serine/threonine kinase Pkn1, may play a role in the specific interactions with host proteins during intracellular growth. Autophosphorylates and also phosphorylates Pkn1. This Chlamydia trachomatis serovar D (strain ATCC VR-885 / DSM 19411 / UW-3/Cx) protein is Serine/threonine-protein kinase PknD.